A 795-amino-acid polypeptide reads, in one-letter code: Probable diacylglycerol kinase 3 (795 aa).

EF-hand domains follow at residues 170-205 (TPEN…MMNV) and 215-250 (ELEQ…NIPL). Asp-183, Asp-185, Asn-187, Glu-194, Asp-228, Asp-230, Asp-232, and Glu-239 together coordinate Ca(2+). Phorbol-ester/DAG-type zinc fingers lie at residues 265-316 (SHVW…ATNC) and 329-375 (YHHW…AQEC). A DAGKc domain is found at 423–558 (NDCRPLLVLV…MDRWQIKIEI (136 aa)).

It belongs to the eukaryotic diacylglycerol kinase family. Monomer.

The enzyme catalyses a 1,2-diacyl-sn-glycerol + ATP = a 1,2-diacyl-sn-glycero-3-phosphate + ADP + H(+). Involved in AFD-neuron mediated thermotaxis. Regulates behavior to environmental temperature. Thought to have a role in olfactory adaptation by affecting diacylglycerol levels. The chain is Probable diacylglycerol kinase 3 (dgk-3) from Caenorhabditis elegans.